We begin with the raw amino-acid sequence, 62 residues long: Large ribosomal subunit protein eL24 (62 aa).

Zn(2+) is bound by residues Cys6, Cys9, Cys32, and Cys36. A C4-type zinc finger spans residues 6-36 (CYFCGKMLEPGTGKLYVKKDGSTYFMCSSKC).

The protein belongs to the eukaryotic ribosomal protein eL24 family. Part of the 50S ribosomal subunit. Forms a cluster with proteins L3 and L14. Zn(2+) serves as cofactor.

Its function is as follows. Binds to the 23S rRNA. The protein is Large ribosomal subunit protein eL24 of Methanosarcina acetivorans (strain ATCC 35395 / DSM 2834 / JCM 12185 / C2A).